The primary structure comprises 507 residues: Chromosomal replication initiator protein DnaA (507 aa).

The domain I, interacts with DnaA modulators stretch occupies residues 1–112 (MTDDPGSGFT…PATDEADDTT (112 aa)). Positions 99 to 162 (RIAPPATDEA…ERPRNTDSAT (64 aa)) are disordered. The segment covering 113 to 127 (VPPSENPATTSPDTT) has biased composition (polar residues). Positions 113–166 (VPPSENPATTSPDTTTDNDEIDDSAAARGDNQHSWPSYFTERPRNTDSATAGVT) are domain II. The tract at residues 167-383 (SLNRRYTFDT…GALIRVTAFA (217 aa)) is domain III, AAA+ region. ATP is bound by residues Gly211, Gly213, Lys214, and Thr215. Positions 384-507 (SLNKTPIDKA…TTRIRQRSKR (124 aa)) are domain IV, binds dsDNA.

It belongs to the DnaA family. As to quaternary structure, oligomerizes as a right-handed, spiral filament on DNA at oriC.

It is found in the cytoplasm. Its function is as follows. Plays an essential role in the initiation and regulation of chromosomal replication. ATP-DnaA binds to the origin of replication (oriC) to initiate formation of the DNA replication initiation complex once per cell cycle. Binds the DnaA box (a 9 base pair repeat at the origin) and separates the double-stranded (ds)DNA. Forms a right-handed helical filament on oriC DNA; dsDNA binds to the exterior of the filament while single-stranded (ss)DNA is stabiized in the filament's interior. The ATP-DnaA-oriC complex binds and stabilizes one strand of the AT-rich DNA unwinding element (DUE), permitting loading of DNA polymerase. After initiation quickly degrades to an ADP-DnaA complex that is not apt for DNA replication. Binds acidic phospholipids. This Mycobacterium bovis (strain ATCC BAA-935 / AF2122/97) protein is Chromosomal replication initiator protein DnaA.